A 513-amino-acid polypeptide reads, in one-letter code: Bifunctional purine biosynthesis protein PurH (513 aa).

Residues 1–146 (MPRFALLSVS…KNHAHLTILT (146 aa)) enclose the MGS-like domain.

Belongs to the PurH family.

The enzyme catalyses (6R)-10-formyltetrahydrofolate + 5-amino-1-(5-phospho-beta-D-ribosyl)imidazole-4-carboxamide = 5-formamido-1-(5-phospho-D-ribosyl)imidazole-4-carboxamide + (6S)-5,6,7,8-tetrahydrofolate. It carries out the reaction IMP + H2O = 5-formamido-1-(5-phospho-D-ribosyl)imidazole-4-carboxamide. It participates in purine metabolism; IMP biosynthesis via de novo pathway; 5-formamido-1-(5-phospho-D-ribosyl)imidazole-4-carboxamide from 5-amino-1-(5-phospho-D-ribosyl)imidazole-4-carboxamide (10-formyl THF route): step 1/1. It functions in the pathway purine metabolism; IMP biosynthesis via de novo pathway; IMP from 5-formamido-1-(5-phospho-D-ribosyl)imidazole-4-carboxamide: step 1/1. In Synechococcus elongatus (strain ATCC 33912 / PCC 7942 / FACHB-805) (Anacystis nidulans R2), this protein is Bifunctional purine biosynthesis protein PurH.